We begin with the raw amino-acid sequence, 305 residues long: MTDMHDDIPAGSRCGYVAIVGRPNVGKSTLLNHILGQKLAITSRKPQTTRHNMLGIKTEGEVQAVYVDTPGLHKSGEKALNRYMNRTASAALKDVDVVIFVVDRTRWTEEDQMVLERVQYVSCPVLIAVNKTDRIEEKADLLPHLEWLTQQLPKAEVVPISAQHGTNLDVLEKLVAERLPESEHFFPEDQITDRSSRFLAAELVREKIMRQLGAELPYQITVEIEEFKQEGRILHIHALILVEREGQKKIIIGDKGERIKSIGQNARKDMEVLFDSKVMLNLWVKVKGGWSDDERALRSLGYGDL.

One can recognise an Era-type G domain in the interval 13–181; sequence RCGYVAIVGR…EKLVAERLPE (169 aa). The segment at 21-28 is G1; the sequence is GRPNVGKS. A GTP-binding site is contributed by 21-28; sequence GRPNVGKS. Residues 47-51 form a G2 region; the sequence is QTTRH. Residues 68–71 are G3; the sequence is DTPG. Residues 68 to 72 and 130 to 133 contribute to the GTP site; these read DTPGL and NKTD. A G4 region spans residues 130-133; sequence NKTD. A G5 region spans residues 160-162; that stretch reads ISA. The region spanning 204 to 288 is the KH type-2 domain; sequence VREKIMRQLG…MLNLWVKVKG (85 aa).

The protein belongs to the TRAFAC class TrmE-Era-EngA-EngB-Septin-like GTPase superfamily. Era GTPase family. As to quaternary structure, monomer.

It localises to the cytoplasm. Its subcellular location is the cell inner membrane. In terms of biological role, an essential GTPase that binds both GDP and GTP, with rapid nucleotide exchange. Plays a role in 16S rRNA processing and 30S ribosomal subunit biogenesis and possibly also in cell cycle regulation and energy metabolism. The polypeptide is GTPase Era (Pseudomonas aeruginosa (strain LESB58)).